Consider the following 572-residue polypeptide: MYRSGERLLGSHALPAEQRDFLPLETTNNNNNHHQPGAWARRAGSSASSPPSASSSPHPSAAVPAADPADSASGSSNKRKRDNKASGGRAAGGGRADGGGVVYSGTPWKRRNYNQGVVGLHEEISDFYEYMSPRPEEEKMRMEVVNRIESVIKELWPSADVQIFGSFKTGLYLPTSDIDLVVFGKWENLPLWTLEEALRKHKVADEDSVKVLDKATVPIIKLTDSFTEVKVDISFNVQNGVRAADLIKDFTKKYPVLPYLVLVLKQFLLQRDLNEVFTGGIGSYSLFLMAVSFLQLHPREDACIPNTNYGVLLIEFFELYGRHFNYLKTGIRIKDGGSYVAKDEVQKNMLDGYRPSMLYIEDPLQPGNDVGRSSYGAMQVKQAFDYAYVVLSHAVSPIAKYYPNNETESILGRIIRVTDEVATYRDWISKQWGLKNRPEPSCNGPVSSSSATQSSSSDVDSDATPCKTPKQLLCRPSTGNRVGSQDVSLESSQAVGKMQSTQTTNTSNSTNKSQHGSARLFRSSSKGFQGTTQTSHGSLMTNKQHQGKSNNQYYHGKKRKHKRDAPLSDLCR.

The interval 1–105 (MYRSGERLLG…ADGGGVVYSG (105 aa)) is disordered. The span at 25–34 (ETTNNNNNHH) shows a compositional bias: polar residues. Positions 36–76 (PGAWARRAGSSASSPPSASSSPHPSAAVPAADPADSASGSS) are enriched in low complexity. Gly residues predominate over residues 89–102 (RAAGGGRADGGGVV). Val-151 participates in a covalent cross-link: Glycyl lysine isopeptide (Lys-Gly) (interchain with G-Cter in SUMO2). Positions 177 and 179 each coordinate Mg(2+). ATP is bound by residues Gly-240, Lys-265, Ser-283, Tyr-284, Asn-368, and Arg-372. Residues 308–368 (NYGVLLIEFF…YIEDPLQPGN (61 aa)) enclose the PAP-associated domain. The interval 435 to 572 (KNRPEPSCNG…RDAPLSDLCR (138 aa)) is disordered. Residues 446-464 (VSSSSATQSSSSDVDSDAT) show a composition bias toward low complexity. A Glycyl lysine isopeptide (Lys-Gly) (interchain with G-Cter in SUMO2) cross-link involves residue Lys-470. A compositionally biased stretch (polar residues) spans 477–494 (STGNRVGSQDVSLESSQA). Ser-484 is subject to Phosphoserine. Residues Lys-497, Lys-512, and Lys-526 each participate in a glycyl lysine isopeptide (Lys-Gly) (interchain with G-Cter in SUMO2) cross-link. A compositionally biased stretch (low complexity) spans 499-514 (QSTQTTNTSNSTNKSQ). The span at 522–553 (RSSSKGFQGTTQTSHGSLMTNKQHQGKSNNQY) shows a compositional bias: polar residues. The Basic, involved in binding of the RNA primer motif lies at 557-563 (KKRKHKR).

The protein belongs to the DNA polymerase type-B-like family. As to quaternary structure, component of a nucleolar TRAMP-like complex, an ATP-dependent exosome regulatory complex consisting of a helicase (MTREX), an oligadenylate polymerase (TENT4B or TENT4A), and a substrate specific RNA-binding factor (ZCCHC7 or ZCCHC8). Several TRAMP-like complexes exist with specific compositions and are associated with nuclear, or nucleolar RNA exosomes. Interacts with CPEB1; the interaction is required for TENT4B-mediated translational control. The cofactor is Mg(2+). Requires Mn(2+) as cofactor.

It is found in the nucleus. The protein localises to the nucleolus. It localises to the cytoplasm. It catalyses the reaction RNA(n) + ATP = RNA(n)-3'-adenine ribonucleotide + diphosphate. Terminal nucleotidyltransferase that catalyzes preferentially the transfer of ATP and GTP on RNA 3' poly(A) tail creating a heterogeneous 3' poly(A) tail leading to mRNAs stabilization by protecting mRNAs from active deadenylation. Also functions as a catalytic subunit of a TRAMP-like complex which has a poly(A) RNA polymerase activity and is involved in a post-transcriptional quality control mechanism. Polyadenylation with short oligo(A) tails is required for the degradative activity of the exosome on several of its nuclear RNA substrates. Doesn't need a cofactor for polyadenylation activity (in vitro). Required for cytoplasmic polyadenylation of mRNAs involved in carbohydrate metabolism, including the glucose transporter SLC2A1/GLUT1. Plays a role in replication-dependent histone mRNA degradation, probably through terminal uridylation of mature histone mRNAs. May play a role in sister chromatid cohesion. Mediates 3' adenylation of the microRNA MIR21 followed by its 3'-to-5' trimming by the exoribonuclease PARN leading to degradation. Mediates 3' adenylation of H/ACA box snoRNAs (small nucleolar RNAs) followed by its 3'-to-5' trimming by the exoribonuclease PARN which enhances snoRNA stability and maturation. This Homo sapiens (Human) protein is Terminal nucleotidyltransferase 4B.